The sequence spans 319 residues: tRNA uridine(34) hydroxylase (319 aa).

The Rhodanese domain maps to 125-219; sequence LDENTVVIDA…YGKDPEVQGD (95 aa). Cys-179 acts as the Cysteine persulfide intermediate in catalysis.

Belongs to the TrhO family.

It carries out the reaction uridine(34) in tRNA + AH2 + O2 = 5-hydroxyuridine(34) in tRNA + A + H2O. Functionally, catalyzes oxygen-dependent 5-hydroxyuridine (ho5U) modification at position 34 in tRNAs. In Lactococcus lactis subsp. cremoris (strain MG1363), this protein is tRNA uridine(34) hydroxylase.